The primary structure comprises 290 residues: Polyamine aminopropyltransferase (290 aa).

Residues 5-238 enclose the PABS domain; sequence QLWYEKLHSS…GIMTFAWASE (234 aa). Residue Gln33 participates in S-methyl-5'-thioadenosine binding. Spermidine is bound by residues His64 and Asp88. S-methyl-5'-thioadenosine-binding positions include Glu108 and 140-141; that span reads DG. Residue Asp158 is the Proton acceptor of the active site. A spermidine-binding site is contributed by 158–161; the sequence is DSTD. Residue Pro165 coordinates S-methyl-5'-thioadenosine.

The protein belongs to the spermidine/spermine synthase family. As to quaternary structure, homodimer or homotetramer.

It localises to the cytoplasm. The enzyme catalyses S-adenosyl 3-(methylsulfanyl)propylamine + putrescine = S-methyl-5'-thioadenosine + spermidine + H(+). It functions in the pathway amine and polyamine biosynthesis; spermidine biosynthesis; spermidine from putrescine: step 1/1. Its function is as follows. Catalyzes the irreversible transfer of a propylamine group from the amino donor S-adenosylmethioninamine (decarboxy-AdoMet) to putrescine (1,4-diaminobutane) to yield spermidine. The chain is Polyamine aminopropyltransferase from Hamiltonella defensa subsp. Acyrthosiphon pisum (strain 5AT).